Reading from the N-terminus, the 296-residue chain is MAWLGSLDLHYRPDPDAPAAALPRTIGRGVHSGPLRVLQSLYPEGPGICHHVLVHPPGGIVGGDELALTAQVDTGAHALLTTPGATRFYRSGGDAALQTLTARVADGARLEWLPLETLVHDGARARNALRFELAPGAEMLGWDLLALGLPAAGERYASGCFEQSIEVRSAAHPLPWLERGVLDFDDPRHAPVTQRLLASPLGWAGHTVLATLWFASGTALASARRDALIDAARAPDSAAQPGAEPLGVTAPHDHVVVLRMLGARVEPLMQRLRAVRGRWRRLAWDCAGAEPRVWRT.

It belongs to the UreD family. In terms of assembly, ureD, UreF and UreG form a complex that acts as a GTP-hydrolysis-dependent molecular chaperone, activating the urease apoprotein by helping to assemble the nickel containing metallocenter of UreC. The UreE protein probably delivers the nickel.

It is found in the cytoplasm. Functionally, required for maturation of urease via the functional incorporation of the urease nickel metallocenter. This Methylibium petroleiphilum (strain ATCC BAA-1232 / LMG 22953 / PM1) protein is Urease accessory protein UreD.